Consider the following 1067-residue polypeptide: Kinesin-like protein KIF11-A (1067 aa).

Residues 18–359 form the Kinesin motor domain; that stretch reads NIQVVVRCRP…LDYASRAKNI (342 aa). 105 to 112 is a binding site for ATP; that stretch reads GQTGTGKT. Coiled coils occupy residues 365-480, 692-721, and 882-915; these read VNQK…QEAF, DSSSALSSIQSEYESLKEEIATAQSTHSEG, and QAQEKALTSLVEQVKDDKEMLGEQRLELNEQVQS. Position 937 is a phosphothreonine; by CDK1 (T937). S1046 carries the phosphoserine; by NEK6 modification.

The protein belongs to the TRAFAC class myosin-kinesin ATPase superfamily. Kinesin family. BimC subfamily. Heterotetramer of two heavy and two light chains. Interacts with aurka. Post-translationally, phosphorylation of Thr-937 during mitosis controls the association of this protein with the spindle apparatus. In terms of processing, a subset of this protein primarily localized at the spindle pole is phosphorylated by NEK6 during mitosis. Phosphorylated on a serine residue by aurka. As to expression, highly expressed in unfertilized eggs, especially in the germinal vesicle and in the radial yolk-poor channels. Also present in testis.

The protein localises to the cytoplasm. The protein resides in the cytoskeleton. It localises to the spindle pole. In terms of biological role, plus end-directed motor protein required for establishing a bipolar spindle. Associates with both interphase and spindle microtubules. May be involved in nuclear divisions taking place during the development of unfertilized eggs. Required in non-mitotic cells for transport of secretory proteins from the Golgi complex to the cell surface. The protein is Kinesin-like protein KIF11-A (kif11-a) of Xenopus laevis (African clawed frog).